Reading from the N-terminus, the 46-residue chain is Succinate dehydrogenase subunit 8, mitochondrial (46 aa).

As to quaternary structure, component of complex II composed of eight subunits in plants: four classical SDH subunits SDH1, SDH2, SDH3 and SDH4 (a flavoprotein (FP), an iron-sulfur protein (IP), and a cytochrome b composed of a large and a small subunit.), as well as four subunits unknown in mitochondria from bacteria and heterotrophic eukaryotes.

The protein localises to the mitochondrion inner membrane. The protein operates within carbohydrate metabolism; tricarboxylic acid cycle. The sequence is that of Succinate dehydrogenase subunit 8, mitochondrial from Arabidopsis thaliana (Mouse-ear cress).